We begin with the raw amino-acid sequence, 218 residues long: Probable GTP-binding protein EngB (218 aa).

Positions 31–205 (SGIEIAFAGR…EQKVTSWYAQ (175 aa)) constitute an EngB-type G domain. Residues 39 to 46 (GRSNAGKS), 66 to 70 (GRTQL), 84 to 87 (DLPG), 151 to 154 (TKAD), and 184 to 186 (FSS) each bind GTP. 2 residues coordinate Mg(2+): Ser-46 and Thr-68.

The protein belongs to the TRAFAC class TrmE-Era-EngA-EngB-Septin-like GTPase superfamily. EngB GTPase family. Requires Mg(2+) as cofactor.

Functionally, necessary for normal cell division and for the maintenance of normal septation. The protein is Probable GTP-binding protein EngB of Psychromonas ingrahamii (strain DSM 17664 / CCUG 51855 / 37).